The primary structure comprises 59 residues: MAVQQNKKSPSKRGMHRSHDHLSAAPLAVEPTTGETHLRHHVSPNGYYRGRKVIKTKND.

A disordered region spans residues 1-59; sequence MAVQQNKKSPSKRGMHRSHDHLSAAPLAVEPTTGETHLRHHVSPNGYYRGRKVIKTKND. Basic residues-rich tracts occupy residues 9-19 and 49-59; these read SPSKRGMHRSH and RGRKVIKTKND.

This sequence belongs to the bacterial ribosomal protein bL32 family.

This Cupriavidus necator (strain ATCC 17699 / DSM 428 / KCTC 22496 / NCIMB 10442 / H16 / Stanier 337) (Ralstonia eutropha) protein is Large ribosomal subunit protein bL32.